The following is a 550-amino-acid chain: Copine-F (550 aa).

2 consecutive C2 domains span residues 1-115 (MAET…RLIG) and 123-246 (ITGK…PIIN). Residues 296–521 (DLMVAIDCTE…DFQNEILRKL (226 aa)) enclose the VWFA domain.

It belongs to the copine family.

This Dictyostelium discoideum (Social amoeba) protein is Copine-F (cpnF).